Consider the following 367-residue polypeptide: Anthranilate phosphoribosyltransferase (367 aa).

Residues Gly-105, Gly-108 to Asp-109, Thr-113, Asn-115 to Thr-118, Lys-133 to Ser-141, and Gly-145 each bind 5-phospho-alpha-D-ribose 1-diphosphate. Gly-105 provides a ligand contact to anthranilate. Position 117 (Ser-117) interacts with Mg(2+). Asn-136 contributes to the anthranilate binding site. Arg-191 serves as a coordination point for anthranilate. The Mg(2+) site is built by Asp-249 and Glu-250.

This sequence belongs to the anthranilate phosphoribosyltransferase family. As to quaternary structure, homodimer. Mg(2+) is required as a cofactor.

The catalysed reaction is N-(5-phospho-beta-D-ribosyl)anthranilate + diphosphate = 5-phospho-alpha-D-ribose 1-diphosphate + anthranilate. It participates in amino-acid biosynthesis; L-tryptophan biosynthesis; L-tryptophan from chorismate: step 2/5. Catalyzes the transfer of the phosphoribosyl group of 5-phosphorylribose-1-pyrophosphate (PRPP) to anthranilate to yield N-(5'-phosphoribosyl)-anthranilate (PRA). The sequence is that of Anthranilate phosphoribosyltransferase from Corynebacterium jeikeium (strain K411).